The following is a 272-amino-acid chain: Exosome complex component Rrp42 (272 aa).

Belongs to the RNase PH family. Rrp42 subfamily. As to quaternary structure, component of the archaeal exosome complex. Forms a hexameric ring-like arrangement composed of 3 Rrp41-Rrp42 heterodimers. The hexameric ring associates with a trimer of Rrp4 and/or Csl4 subunits.

The protein resides in the cytoplasm. Functionally, non-catalytic component of the exosome, which is a complex involved in RNA degradation. Contributes to the structuring of the Rrp41 active site. In Thermococcus kodakarensis (strain ATCC BAA-918 / JCM 12380 / KOD1) (Pyrococcus kodakaraensis (strain KOD1)), this protein is Exosome complex component Rrp42.